A 674-amino-acid polypeptide reads, in one-letter code: RNA polymerase sigma factor RpoD (674 aa).

Residues alanine 214–asparagine 252 form a disordered region. The sigma-70 factor domain-2 stretch occupies residues methionine 440–threonine 510. The Interaction with polymerase core subunit RpoC signature appears at aspartate 464–glutamine 467. The tract at residues glutamate 519 to serine 595 is sigma-70 factor domain-3. The tract at residues valine 608–histidine 661 is sigma-70 factor domain-4. A DNA-binding region (H-T-H motif) is located at residues leucine 634–alanine 653.

It belongs to the sigma-70 factor family. RpoD/SigA subfamily. Interacts transiently with the RNA polymerase catalytic core.

Its subcellular location is the cytoplasm. Functionally, sigma factors are initiation factors that promote the attachment of RNA polymerase to specific initiation sites and are then released. This sigma factor is the primary sigma factor during exponential growth. This chain is RNA polymerase sigma factor RpoD, found in Rhodobacter capsulatus (strain ATCC BAA-309 / NBRC 16581 / SB1003).